An 825-amino-acid polypeptide reads, in one-letter code: NT-3 growth factor receptor (825 aa).

The first 31 residues, 1–31 (MDVSLCPAKCSFWRIFLLGSVWLDYVGSVLA), serve as a signal peptide directing secretion. 2 disulfides stabilise this stretch: Cys-32–Cys-38 and Cys-36–Cys-45. Over 32 to 429 (CPANCVCSKT…TVTHKPEEDT (398 aa)) the chain is Extracellular. 3 N-linked (GlcNAc...) asparagine glycosylation sites follow: Asn-68, Asn-72, and Asn-79. LRR repeat units lie at residues 104–125 (GLQKLTIRNSGLRSIQPRAFAK) and 128–149 (HLRYINLSSNRLTTLSWQLFQT). Asn-133 and Asn-163 each carry an N-linked (GlcNAc...) asparagine glycan. Positions 160 to 209 (NFFNCSCDIRWMQLWQEQGEAKLNNQNLYCINADGSQLPLFRMNISQCDL) constitute an LRRCT domain. 2 cysteine pairs are disulfide-bonded: Cys-164–Cys-189 and Cys-166–Cys-207. Residues Asn-203, Asn-218, Asn-232, Asn-259, Asn-267, Asn-272, and Asn-294 are each glycosylated (N-linked (GlcNAc...) asparagine). Ig-like C2-type domains are found at residues 210 to 300 (PEIS…VALT) and 309 to 382 (SLEE…IAKN). A disulfide bond links Cys-231 and Cys-284. Cys-320 and Cys-362 form a disulfide bridge. 2 N-linked (GlcNAc...) asparagine glycosylation sites follow: Asn-375 and Asn-388. A helical membrane pass occupies residues 430–453 (FGVSIAVGLAAFACVLLVVLFIMI). Residues 454–825 (NKYGRRSKFG…ATPIYLDILG (372 aa)) lie on the Cytoplasmic side of the membrane. Position 493 is a phosphoserine (Ser-493). The residue at position 516 (Tyr-516) is a Phosphotyrosine; by autocatalysis. A Protein kinase domain is found at 538–825 (IVLKRELGEG…ATPIYLDILG (288 aa)). ATP contacts are provided by residues 544 to 552 (LGEGAFGKV) and Lys-572. The Proton acceptor role is filled by Asp-679. Residues Tyr-705, Tyr-709, and Tyr-710 each carry the phosphotyrosine; by autocatalysis modification.

It belongs to the protein kinase superfamily. Tyr protein kinase family. Insulin receptor subfamily. In terms of assembly, exists in a dynamic equilibrium between monomeric (low affinity) and dimeric (high affinity) structures. Binds SH2B2. Interacts with SQSTM1 and KIDINS220. Interacts with PTPRS. Interacts with MAPK8IP3/JIP3. Ligand-mediated auto-phosphorylation.

It localises to the membrane. It catalyses the reaction L-tyrosyl-[protein] + ATP = O-phospho-L-tyrosyl-[protein] + ADP + H(+). Receptor tyrosine kinase involved in nervous system and probably heart development. Upon binding of its ligand NTF3/neurotrophin-3, NTRK3 autophosphorylates and activates different signaling pathways, including the phosphatidylinositol 3-kinase/AKT and the MAPK pathways, that control cell survival and differentiation. The polypeptide is NT-3 growth factor receptor (NTRK3) (Macaca fascicularis (Crab-eating macaque)).